Here is a 280-residue protein sequence, read N- to C-terminus: uncharacterized protein (280 aa).

An N-terminal signal peptide occupies residues 1–26 (MNILIKSAVKNFIVFSTALYTSFSFA).

It to E.coli YibQ.

This is an uncharacterized protein from Haemophilus influenzae (strain ATCC 51907 / DSM 11121 / KW20 / Rd).